Here is an 85-residue protein sequence, read N- to C-terminus: Homeobox protein knotted-1-like 4 (85 aa).

Positions 1–21 constitute an ELK domain; the sequence is ELKYQLLKKYSGYLSSLRQEF. Residues 22–85 constitute a DNA-binding region (homeobox; TALE-type); sequence SKKKKKGKLP…NQRKRHWKPS (64 aa).

Belongs to the TALE/KNOX homeobox family. Strongly expressed in ear inflorescence primordia and shoot meristem. Weakly expressed in embryos. Absent from leaves.

It is found in the nucleus. Functionally, probably binds to the DNA sequence 5'-TGAC-3'. This chain is Homeobox protein knotted-1-like 4 (KNOX4), found in Zea mays (Maize).